We begin with the raw amino-acid sequence, 549 residues long: Chaperonin GroEL (549 aa).

ATP-binding positions include 30–33, Lys-51, 87–91, Gly-415, and Asp-497; these read TLGP and DGTTT.

This sequence belongs to the chaperonin (HSP60) family. As to quaternary structure, forms a cylinder of 14 subunits composed of two heptameric rings stacked back-to-back. Interacts with the co-chaperonin GroES.

The protein localises to the cytoplasm. The enzyme catalyses ATP + H2O + a folded polypeptide = ADP + phosphate + an unfolded polypeptide.. Functionally, together with its co-chaperonin GroES, plays an essential role in assisting protein folding. The GroEL-GroES system forms a nano-cage that allows encapsulation of the non-native substrate proteins and provides a physical environment optimized to promote and accelerate protein folding. The chain is Chaperonin GroEL from Pectobacterium atrosepticum (strain SCRI 1043 / ATCC BAA-672) (Erwinia carotovora subsp. atroseptica).